The following is a 95-amino-acid chain: Aspartyl/glutamyl-tRNA(Asn/Gln) amidotransferase subunit C (95 aa).

The protein belongs to the GatC family. In terms of assembly, heterotrimer of A, B and C subunits.

The catalysed reaction is L-glutamyl-tRNA(Gln) + L-glutamine + ATP + H2O = L-glutaminyl-tRNA(Gln) + L-glutamate + ADP + phosphate + H(+). The enzyme catalyses L-aspartyl-tRNA(Asn) + L-glutamine + ATP + H2O = L-asparaginyl-tRNA(Asn) + L-glutamate + ADP + phosphate + 2 H(+). Its function is as follows. Allows the formation of correctly charged Asn-tRNA(Asn) or Gln-tRNA(Gln) through the transamidation of misacylated Asp-tRNA(Asn) or Glu-tRNA(Gln) in organisms which lack either or both of asparaginyl-tRNA or glutaminyl-tRNA synthetases. The reaction takes place in the presence of glutamine and ATP through an activated phospho-Asp-tRNA(Asn) or phospho-Glu-tRNA(Gln). The chain is Aspartyl/glutamyl-tRNA(Asn/Gln) amidotransferase subunit C from Laribacter hongkongensis (strain HLHK9).